Here is a 222-residue protein sequence, read N- to C-terminus: Cytidylate kinase (222 aa).

Residue 10–18 (GPSASGKGT) coordinates ATP.

Belongs to the cytidylate kinase family. Type 1 subfamily.

The protein resides in the cytoplasm. It catalyses the reaction CMP + ATP = CDP + ADP. The catalysed reaction is dCMP + ATP = dCDP + ADP. The polypeptide is Cytidylate kinase (Chromobacterium violaceum (strain ATCC 12472 / DSM 30191 / JCM 1249 / CCUG 213 / NBRC 12614 / NCIMB 9131 / NCTC 9757 / MK)).